A 282-amino-acid chain; its full sequence is Pantothenate synthetase (282 aa).

Residue 30–37 (MGYLHEGH) coordinates ATP. H37 functions as the Proton donor in the catalytic mechanism. Q61 provides a ligand contact to (R)-pantoate. Beta-alanine is bound at residue Q61. Residue 147–150 (GMKD) coordinates ATP. Residue Q153 coordinates (R)-pantoate. ATP contacts are provided by residues V176 and 184 to 187 (KSSR).

It belongs to the pantothenate synthetase family. As to quaternary structure, homodimer.

It is found in the cytoplasm. The catalysed reaction is (R)-pantoate + beta-alanine + ATP = (R)-pantothenate + AMP + diphosphate + H(+). It participates in cofactor biosynthesis; (R)-pantothenate biosynthesis; (R)-pantothenate from (R)-pantoate and beta-alanine: step 1/1. Functionally, catalyzes the condensation of pantoate with beta-alanine in an ATP-dependent reaction via a pantoyl-adenylate intermediate. This is Pantothenate synthetase from Bacillus cereus (strain ATCC 10987 / NRS 248).